The sequence spans 332 residues: D-xylose-binding periplasmic protein (332 aa).

An N-terminal signal peptide occupies residues 1-23 (MKIKSALLTLVGALTVFSSSAHS).

It belongs to the bacterial solute-binding protein 2 family.

It localises to the periplasm. Functionally, involved in the high-affinity D-xylose membrane transport system. Binds with high affinity to xylose. The polypeptide is D-xylose-binding periplasmic protein (xylF) (Haemophilus influenzae (strain ATCC 51907 / DSM 11121 / KW20 / Rd)).